Consider the following 113-residue polypeptide: MRYVAAYLLAVLGGKDSPANSDLEKILSSVGVEVDAERLTKVIKELAGKSIDDLIKEGREKLSSMPVGGGGAVAAADAAPAAAAGGDKKEAKKEEKKEESESEDDDMGFALFE.

A disordered region spans residues 66–113 (PVGGGGAVAAADAAPAAAAGGDKKEAKKEEKKEESESEDDDMGFALFE). Low complexity predominate over residues 73–85 (VAAADAAPAAAAG). Over residues 86–99 (GDKKEAKKEEKKEE) the composition is skewed to basic and acidic residues. 2 positions are modified to phosphoserine: serine 100 and serine 102.

Belongs to the eukaryotic ribosomal protein P1/P2 family. In terms of assembly, P1 and P2 exist as dimers at the large ribosomal subunit.

Its function is as follows. Plays an important role in the elongation step of protein synthesis. The polypeptide is Large ribosomal subunit protein P2 (RpLP2) (Drosophila melanogaster (Fruit fly)).